A 110-amino-acid chain; its full sequence is UPF0122 protein BCA_3946 (110 aa).

Belongs to the UPF0122 family.

Might take part in the signal recognition particle (SRP) pathway. This is inferred from the conservation of its genetic proximity to ftsY/ffh. May be a regulatory protein. The chain is UPF0122 protein BCA_3946 from Bacillus cereus (strain 03BB102).